We begin with the raw amino-acid sequence, 125 residues long: UPF0538 protein C2C4.04c (125 aa).

This sequence belongs to the UPF0538 family.

The chain is UPF0538 protein C2C4.04c from Schizosaccharomyces pombe (strain 972 / ATCC 24843) (Fission yeast).